The chain runs to 524 residues: MISPFLVLAIGTCLTNSLVPEKEKDPKYWRDQAQQTLKNALRLQKLNTNVVKNVIMFLGDGMGVSTVTAARILKGQLHHNPGEETRLEMDKFPYVALSKTYNTNAQVPDSAGTATAYLCGVKANEGTVGVSAATQRTQCNTTQGNEVTSILRWAKDSGKSVGIVTTTRVNHATPSAAYAHSADRDWYSDNEMPPEALSQGCKDIAYQLMHNVRDIEVIMGGGRKYMFPKNRTDVEYEMDEKARGTRLDGLNLVDIWKSFKPRHKHSHYVWNRTELLTLDPYGVDYLLGLFEPGDMQYELNRNSTTDPSLSEMVEIAIKILSKNPKGFFLLVEGGRIDHGHHEGKAKQALHEAVEMDQAIGRAGAMTSVEDTLTIVTADHSHVFTFGGYTPRGNSIFGLAPMVSDTDKKPFTSILYGNGPGYKVVGGERENVSMVDYAHNNYQAQSAVPLRHETHGGEDVAVFAKGPMAHLLHGVHEQNYIPHVMAYAACIGANLDHCASASSAGGPSPGPLFLLLALPSLGILF.

The signal sequence occupies residues 1 to 17; it reads MISPFLVLAIGTCLTNS. D60 contacts Mg(2+). Zn(2+)-binding residues include D60 and S110. The Phosphoserine intermediate role is filled by S110. S110 is modified (phosphoserine). A disulfide bond links C139 and C201. N140 carries an N-linked (GlcNAc...) asparagine glycan. T173 contacts Mg(2+). Residue N230 is glycosylated (N-linked (GlcNAc...) asparagine). E235 serves as a coordination point for Ca(2+). The N-linked (GlcNAc...) asparagine glycan is linked to N271. Ca(2+)-binding residues include F290 and E291. N302 is a glycosylation site (N-linked (GlcNAc...) asparagine). Ca(2+) is bound at residue D306. E332 lines the Mg(2+) pocket. 4 residues coordinate Zn(2+): D337, H341, D378, and H379. N430 is a glycosylation site (N-linked (GlcNAc...) asparagine). H454 contacts Zn(2+). A disulfide bridge connects residues C489 and C497. S499 carries the GPI-anchor amidated serine lipid modification. The propeptide at 500–524 is removed in mature form; the sequence is ASSAGGPSPGPLFLLLALPSLGILF.

Belongs to the alkaline phosphatase family. Homodimer. The cofactor is Mg(2+). Zn(2+) serves as cofactor. Ca(2+) is required as a cofactor. Post-translationally, N-glycosylated.

It localises to the cell membrane. The protein resides in the extracellular vesicle membrane. Its subcellular location is the mitochondrion membrane. The protein localises to the mitochondrion intermembrane space. The enzyme catalyses a phosphate monoester + H2O = an alcohol + phosphate. It catalyses the reaction diphosphate + H2O = 2 phosphate + H(+). The catalysed reaction is pyridoxal 5'-phosphate + H2O = pyridoxal + phosphate. It carries out the reaction phosphoethanolamine + H2O = ethanolamine + phosphate. The enzyme catalyses N-phosphocreatine + H2O = creatine + phosphate. It catalyses the reaction ATP + H2O = ADP + phosphate + H(+). The catalysed reaction is ADP + H2O = AMP + phosphate + H(+). It carries out the reaction AMP + H2O = adenosine + phosphate. Phosphatase activity is specifically inhibited by 5-((5-chloro-2-methoxyphenyl)sulfonamido)nicotinamide (SBI-425). In terms of biological role, alkaline phosphatase that metabolizes various phosphate compounds and plays a key role in skeletal mineralization and adaptive thermogenesis. Has broad substrate specificity and can hydrolyze a considerable variety of compounds: however, only a few substrates, such as diphosphate (inorganic pyrophosphate; PPi), pyridoxal 5'-phosphate (PLP) and N-phosphocreatine are natural substrates. Plays an essential role in skeletal and dental mineralization via its ability to hydrolyze extracellular diphosphate, a potent mineralization inhibitor, to phosphate: it thereby promotes hydroxyapatite crystal formation and increases inorganic phosphate concentration. Acts in a non-redundant manner with PHOSPHO1 in skeletal mineralization: while PHOSPHO1 mediates the initiation of hydroxyapatite crystallization in the matrix vesicles (MVs), ALPL/TNAP catalyzes the spread of hydroxyapatite crystallization in the extracellular matrix. Also promotes dephosphorylation of osteopontin (SSP1), an inhibitor of hydroxyapatite crystallization in its phosphorylated state; it is however unclear whether ALPL/TNAP mediates SSP1 dephosphorylation via a direct or indirect manner. Catalyzes dephosphorylation of PLP to pyridoxal (PL), the transportable form of vitamin B6, in order to provide a sufficient amount of PLP in the brain, an essential cofactor for enzymes catalyzing the synthesis of diverse neurotransmitters. Additionally, also able to mediate ATP degradation in a stepwise manner to adenosine, thereby regulating the availability of ligands for purinergic receptors. Also capable of dephosphorylating microbial products, such as lipopolysaccharides (LPS) as well as other phosphorylated small-molecules, such as poly-inosine:cytosine (poly I:C). Acts as a key regulator of adaptive thermogenesis as part of the futile creatine cycle: localizes to the mitochondria of thermogenic fat cells and acts by mediating hydrolysis of N-phosphocreatine to initiate a futile cycle of creatine dephosphorylation and phosphorylation. During the futile creatine cycle, creatine and N-phosphocreatine are in a futile cycle, which dissipates the high energy charge of N-phosphocreatine as heat without performing any mechanical or chemical work. The chain is Alkaline phosphatase, tissue-nonspecific isozyme (ALPL) from Felis catus (Cat).